The chain runs to 405 residues: Deoxyguanosinetriphosphate triphosphohydrolase-like protein (405 aa).

Residues 75–219 (RLTHTIEVAQ…AAIADDIAYN (145 aa)) form the HD domain.

The protein belongs to the dGTPase family. Type 2 subfamily.

In Rhizobium meliloti (strain 1021) (Ensifer meliloti), this protein is Deoxyguanosinetriphosphate triphosphohydrolase-like protein.